A 376-amino-acid chain; its full sequence is Chlorophyll synthase, chloroplastic (376 aa).

The N-terminal 47 residues, 1–47, are a transit peptide targeting the chloroplast; that stretch reads MATSHLLAAASSTAASSATFRPPLLSLRSPPPSSLRLNRRRHFQVVR. A disordered region spans residues 48 to 69; the sequence is AAETDKETKANAPEKAPAGGSS. Helical transmembrane passes span 95–115, 171–191, 197–217, 230–250, 255–275, 300–320, 325–345, and 355–375; these read PVTWPPLVWGVLCGAAASGNF, VITQIWALLLAGLGLGALLDV, FPIIFYLAVGGSLLSYIYSAP, FALGASYIGLPWWAGQALFGT, IVVLTSLYSIAGLGIAIVNDF, WICVGAIDITQLSVAGYLFSS, YALALLGLTIPQVVFQFQYFL, and YQASAQPFFVLGLLVTALATS.

The protein belongs to the UbiA prenyltransferase family. Chlorophyll synthase subfamily.

Its subcellular location is the plastid. The protein localises to the chloroplast membrane. The catalysed reaction is phytyl diphosphate + chlorophyllide a + H(+) = chlorophyll a + diphosphate. Its function is as follows. Involved in one of the last steps of the biosynthesis of chlorophyll a. This is Chlorophyll synthase, chloroplastic (CHLG) from Oryza sativa subsp. japonica (Rice).